Here is a 629-residue protein sequence, read N- to C-terminus: Probable potassium transport system protein Kup 3 (629 aa).

12 consecutive transmembrane segments (helical) span residues 20-40 (LSLS…LYTF), 54-74 (VTTI…IASV), 106-126 (PFII…GTIT), 143-163 (PSLK…LFAI), 171-191 (IGKA…ILGA), 212-232 (FLFS…LCVT), 253-273 (WFGL…ALVL), 291-311 (FLLP…QAII), 343-363 (IYIG…IIGF), 372-392 (AYGI…FIAL), 400-420 (IIKS…FFAA), and 425-445 (FING…MMYI).

This sequence belongs to the HAK/KUP transporter (TC 2.A.72) family.

The protein localises to the cell inner membrane. The enzyme catalyses K(+)(in) + H(+)(in) = K(+)(out) + H(+)(out). In terms of biological role, transport of potassium into the cell. Likely operates as a K(+):H(+) symporter. This is Probable potassium transport system protein Kup 3 from Legionella pneumophila (strain Corby).